A 166-amino-acid chain; its full sequence is Large ribosomal subunit protein uL10 (166 aa).

This sequence belongs to the universal ribosomal protein uL10 family. In terms of assembly, part of the ribosomal stalk of the 50S ribosomal subunit. The N-terminus interacts with L11 and the large rRNA to form the base of the stalk. The C-terminus forms an elongated spine to which L12 dimers bind in a sequential fashion forming a multimeric L10(L12)X complex.

Functionally, forms part of the ribosomal stalk, playing a central role in the interaction of the ribosome with GTP-bound translation factors. This chain is Large ribosomal subunit protein uL10, found in Pseudomonas putida (strain GB-1).